The primary structure comprises 427 residues: Indole diterpene prenyltransferase penD (427 aa).

77–78 lines the L-tryptophan pocket; that stretch reads YV. Arginine 99, lysine 186, tyrosine 188, arginine 259, lysine 261, tyrosine 263, tyrosine 344, tyrosine 409, and tyrosine 413 together coordinate substrate.

This sequence belongs to the tryptophan dimethylallyltransferase family.

Its pathway is secondary metabolite biosynthesis. Functionally, indole diterpene prenyltransferase; part of the gene cluster that mediates the biosynthesis of the indole diterpenes penitrems. The geranylgeranyl diphosphate (GGPP) synthase penG catalyzes the first step in penitrem biosynthesis via conversion of farnesyl pyrophosphate and isopentyl pyrophosphate into geranylgeranyl pyrophosphate (GGPP). Condensation of indole-3-glycerol phosphate with GGPP by the prenyl transferase penC then forms 3-geranylgeranylindole (3-GGI). Epoxidation by the FAD-dependent monooxygenase penM leads to a epoxidized-GGI that is substrate of the terpene cyclase penB for cyclization to yield paspaline. Paspaline is subsequently converted to 13-desoxypaxilline by the cytochrome P450 monooxygenase penP, the latter being then converted to paxilline by the cytochrome P450 monooxygenase penQ. Paxilline is converted to beta-paxitriol via C-10 ketoreduction by the short-chain dehydrogenase PC-15 which can be monoprenylated at the C-20 by the indole diterpene prenyltransferase penD. A two-step elimination (acetylation and elimination) process performed by the O-acetyltransferase PC-16 and the P.simplicissimum ptmI-ortholog not yet identified in P.crustosum, leads to the production of the prenylated form of penijanthine. The FAD-linked oxidoreductase ptmO then converts the prenylated form of penijanthine into PC-M5 which is in turn transformed into PC-M4 by the aromatic dimethylallyltransferase PC-22. A series of oxidation steps involving 4 cytochrome P450 monooxygenases (PC-21, PC-05, PC-23, PC-20) and a FAD-dependent monooxygenase (PC-14) are required for the transformation of PC-M4 to penitrems A and E. Synthesis of these final products is proposed to proceed via penitrems D and C (PC-21, PC-05, PC-14) and penitrems B and F (PC-21, PC-05, PC-14, PC-23). This chain is Indole diterpene prenyltransferase penD, found in Penicillium crustosum (Blue mold fungus).